Consider the following 176-residue polypeptide: MPIKPLIILPDPILREVSKPVEHVDSTIQKLADDMLETMYDAQGVGLAAIQIGIPLRMLVIDVSRNETQKNPLVIINPEILWLSDERNICKEGCLSIPEYYTEIERPKRLCVRYQDREGKQTEIEADHLLATCLQHEIDHLNGRLFIDHISKIKRDMVIRKFKKRAKEKNAQEAIL.

2 residues coordinate Fe cation: C94 and H136. E137 is a catalytic residue. H140 serves as a coordination point for Fe cation.

This sequence belongs to the polypeptide deformylase family. Fe(2+) serves as cofactor.

The catalysed reaction is N-terminal N-formyl-L-methionyl-[peptide] + H2O = N-terminal L-methionyl-[peptide] + formate. Removes the formyl group from the N-terminal Met of newly synthesized proteins. Requires at least a dipeptide for an efficient rate of reaction. N-terminal L-methionine is a prerequisite for activity but the enzyme has broad specificity at other positions. This Bartonella quintana (strain Toulouse) (Rochalimaea quintana) protein is Peptide deformylase.